We begin with the raw amino-acid sequence, 398 residues long: Delta-aminolevulinic acid dehydratase, chloroplastic (398 aa).

A disordered region spans residues 48 to 87 (VPEAPPVPPTPASPAGTPVVPSLPIQRRPRRNRRSPALRS). A compositionally biased stretch (pro residues) spans 50-59 (EAPPVPPTPA). Positions 60 to 69 (SPAGTPVVPS) are enriched in low complexity. Over residues 74–83 (RRPRRNRRSP) the composition is skewed to basic residues. Lys-266 functions as the Schiff-base intermediate with substrate in the catalytic mechanism. 5-aminolevulinate-binding residues include Arg-276 and Lys-288. Glu-304 is a binding site for Mg(2+). Residue Lys-319 is the Schiff-base intermediate with substrate of the active site. 5-aminolevulinate-binding residues include Ser-345 and Tyr-384.

This sequence belongs to the ALAD family. Homooctamer; formed by oligomerization of dimers. Probably also forms lower oligomers. Mg(2+) serves as cofactor.

The protein localises to the plastid. It is found in the chloroplast. It catalyses the reaction 2 5-aminolevulinate = porphobilinogen + 2 H2O + H(+). It participates in porphyrin-containing compound metabolism; protoporphyrin-IX biosynthesis; coproporphyrinogen-III from 5-aminolevulinate: step 1/4. Its activity is regulated as follows. Activated by magnesium. Inhibited by succinyl acetone. Enzyme activity may depend on the oligomerization state, where the fully active octamer may dissociate and reassemble into less active lower oligomers. Functionally, catalyzes an early step in the biosynthesis of tetrapyrroles. Binds two molecules of 5-aminolevulinate per subunit, each at a distinct site, and catalyzes their condensation to form porphobilinogen. This chain is Delta-aminolevulinic acid dehydratase, chloroplastic (HEMB), found in Pisum sativum (Garden pea).